Here is a 427-residue protein sequence, read N- to C-terminus: Dihydroorotase (427 aa).

Residues His-60 and His-62 each contribute to the Zn(2+) site. Substrate contacts are provided by residues 62-64 and Asn-94; that span reads HFR. Asp-152, His-179, and His-232 together coordinate Zn(2+). A substrate-binding site is contributed by Asn-278. Asp-305 lines the Zn(2+) pocket. Residue Asp-305 is part of the active site. Substrate contacts are provided by residues His-309 and 323-324; that span reads FG.

It belongs to the metallo-dependent hydrolases superfamily. DHOase family. Class I DHOase subfamily. Zn(2+) is required as a cofactor.

It carries out the reaction (S)-dihydroorotate + H2O = N-carbamoyl-L-aspartate + H(+). It participates in pyrimidine metabolism; UMP biosynthesis via de novo pathway; (S)-dihydroorotate from bicarbonate: step 3/3. Functionally, catalyzes the reversible cyclization of carbamoyl aspartate to dihydroorotate. This Enterococcus faecalis (strain ATCC 700802 / V583) protein is Dihydroorotase.